Here is a 278-residue protein sequence, read N- to C-terminus: Soluble NSF attachment protein homolog FPV011 (278 aa).

Belongs to the SNAP family.

This Fowlpox virus (strain NVSL) (FPV) protein is Soluble NSF attachment protein homolog FPV011.